A 348-amino-acid chain; its full sequence is Phosphate acyltransferase (348 aa).

The protein belongs to the PlsX family. Homodimer. Probably interacts with PlsY.

It is found in the cytoplasm. The catalysed reaction is a fatty acyl-[ACP] + phosphate = an acyl phosphate + holo-[ACP]. It participates in lipid metabolism; phospholipid metabolism. Functionally, catalyzes the reversible formation of acyl-phosphate (acyl-PO(4)) from acyl-[acyl-carrier-protein] (acyl-ACP). This enzyme utilizes acyl-ACP as fatty acyl donor, but not acyl-CoA. The chain is Phosphate acyltransferase from Nitrosomonas europaea (strain ATCC 19718 / CIP 103999 / KCTC 2705 / NBRC 14298).